Reading from the N-terminus, the 281-residue chain is tRNA uridine(34) hydroxylase (281 aa).

Positions 121–214 constitute a Rhodanese domain; that stretch reads SQPDVLVIDT…YLEKTHNKSG (94 aa). Catalysis depends on cysteine 174, which acts as the Cysteine persulfide intermediate.

It belongs to the TrhO family.

It carries out the reaction uridine(34) in tRNA + AH2 + O2 = 5-hydroxyuridine(34) in tRNA + A + H2O. In terms of biological role, catalyzes oxygen-dependent 5-hydroxyuridine (ho5U) modification at position 34 in tRNAs. This Wolbachia pipientis subsp. Culex pipiens (strain wPip) protein is tRNA uridine(34) hydroxylase.